The following is a 398-amino-acid chain: Elongation factor Tu (398 aa).

A tr-type G domain is found at 10-207 (KPHVNIGTIG…TVDEYIPEPE (198 aa)). Residues 19-26 (GHVDHGKT) form a G1 region. Position 19–26 (19–26 (GHVDHGKT)) interacts with GTP. Position 26 (threonine 26) interacts with Mg(2+). The segment at 63–67 (GITIN) is G2. The interval 84 to 87 (DAPG) is G3. Residues 84–88 (DAPGH) and 139–142 (NKVD) each bind GTP. The segment at 139 to 142 (NKVD) is G4. A G5 region spans residues 177–179 (SAL).

It belongs to the TRAFAC class translation factor GTPase superfamily. Classic translation factor GTPase family. EF-Tu/EF-1A subfamily. Monomer.

The protein localises to the cytoplasm. It carries out the reaction GTP + H2O = GDP + phosphate + H(+). Functionally, GTP hydrolase that promotes the GTP-dependent binding of aminoacyl-tRNA to the A-site of ribosomes during protein biosynthesis. This is Elongation factor Tu from Streptococcus agalactiae serotype V (strain ATCC BAA-611 / 2603 V/R).